The chain runs to 329 residues: Ig gamma-2C chain C region (329 aa).

Residues 1–97 form a CH1 region; that stretch reads ARTTAPSVYP…ATKSNLIKRI (97 aa). An intrachain disulfide couples cysteine 27 to cysteine 82. The interval 98–113 is hinge; the sequence is EPRRPKPRPPTDICSC. The CH2 stretch occupies residues 114-222; sequence DDNLGRPSVF…PIEKTISKPR (109 aa). Disulfide bonds link cysteine 143–cysteine 203 and cysteine 249–cysteine 307. The tract at residues 223 to 329 is CH3; the sequence is GKARTPQVYT…QKNLSRSPGK (107 aa).

The polypeptide is Ig gamma-2C chain C region (Rattus norvegicus (Rat)).